Here is a 248-residue protein sequence, read N- to C-terminus: DNA polymerase sliding clamp (248 aa).

This sequence belongs to the PCNA family. In terms of assembly, homotrimer. The subunits circularize to form a toroid; DNA passes through its center. Replication factor C (RFC) is required to load the toroid on the DNA.

Functionally, sliding clamp subunit that acts as a moving platform for DNA processing. Responsible for tethering the catalytic subunit of DNA polymerase and other proteins to DNA during high-speed replication. This Cenarchaeum symbiosum (strain A) protein is DNA polymerase sliding clamp.